The chain runs to 301 residues: Glucose-1-phosphate adenylyltransferase large subunit (301 aa).

The protein belongs to the bacterial/plant glucose-1-phosphate adenylyltransferase family. As to quaternary structure, heterotetramer.

The protein localises to the plastid. Its subcellular location is the chloroplast. It localises to the amyloplast. It catalyses the reaction alpha-D-glucose 1-phosphate + ATP + H(+) = ADP-alpha-D-glucose + diphosphate. It participates in glycan biosynthesis; starch biosynthesis. Insensitive to 3'phosphoglycerate and orthophosphate. In terms of biological role, this protein plays a role in synthesis of starch. It catalyzes the synthesis of the activated glycosyl donor, ADP-glucose from Glc-1-P and ATP. This chain is Glucose-1-phosphate adenylyltransferase large subunit (AGA.1), found in Triticum aestivum (Wheat).